The chain runs to 85 residues: CRISPR-associated endoribonuclease Cas2 (85 aa).

Asp-8 provides a ligand contact to Mg(2+).

It belongs to the CRISPR-associated endoribonuclease Cas2 protein family. In terms of assembly, homodimer, forms a heterotetramer with a Cas1 homodimer. Mg(2+) is required as a cofactor.

CRISPR (clustered regularly interspaced short palindromic repeat), is an adaptive immune system that provides protection against mobile genetic elements (viruses, transposable elements and conjugative plasmids). CRISPR clusters contain sequences complementary to antecedent mobile elements and target invading nucleic acids. CRISPR clusters are transcribed and processed into CRISPR RNA (crRNA). Functions as a ssRNA-specific endoribonuclease. Involved in the integration of spacer DNA into the CRISPR cassette. This chain is CRISPR-associated endoribonuclease Cas2, found in Pyrococcus furiosus (strain ATCC 43587 / DSM 3638 / JCM 8422 / Vc1).